The chain runs to 32 residues: Cytochrome b6-f complex subunit 7 (32 aa).

The chain crosses the membrane as a helical span at residues 9-27 (AVVFWVLIPVGLAGGALLL).

This sequence belongs to the PetM family. As to quaternary structure, the 4 large subunits of the cytochrome b6-f complex are cytochrome b6, subunit IV (17 kDa polypeptide, PetD), cytochrome f and the Rieske protein, while the 4 small subunits are PetG, PetL, PetM and PetN. The complex functions as a dimer.

The protein resides in the cellular thylakoid membrane. In terms of biological role, component of the cytochrome b6-f complex, which mediates electron transfer between photosystem II (PSII) and photosystem I (PSI), cyclic electron flow around PSI, and state transitions. This chain is Cytochrome b6-f complex subunit 7, found in Synechococcus sp. (strain CC9311).